The sequence spans 248 residues: tRNA (guanine-N(1)-)-methyltransferase (248 aa).

S-adenosyl-L-methionine-binding positions include Gly116 and 135-140; that span reads IGDFVL.

Belongs to the RNA methyltransferase TrmD family. Homodimer.

Its subcellular location is the cytoplasm. The catalysed reaction is guanosine(37) in tRNA + S-adenosyl-L-methionine = N(1)-methylguanosine(37) in tRNA + S-adenosyl-L-homocysteine + H(+). In terms of biological role, specifically methylates guanosine-37 in various tRNAs. This chain is tRNA (guanine-N(1)-)-methyltransferase, found in Anaeromyxobacter sp. (strain Fw109-5).